We begin with the raw amino-acid sequence, 102 residues long: MRQVTIPLIQSKSMFCVIYRSSKRDQTYLYVEKKDDFSRVPEALMKGFGQPQLAMMLPLDGRKKLVNAELEKVKQALSEQGYYLQLPPPPEDLLKQHLSSVG.

Residues 14–98 enclose the YcgL domain; the sequence is MFCVIYRSSK…PPEDLLKQHL (85 aa).

The polypeptide is Protein YcgL (Salmonella agona (strain SL483)).